Reading from the N-terminus, the 285-residue chain is Cold sensitive U2 snRNA suppressor 2 (285 aa).

An RRM 1 domain is found at 45 to 130 (TSIYISGLPT…KQIRVERAQF (86 aa)). Residues 135-149 (GDNMHGKENDLKEFN) show a composition bias toward basic and acidic residues. Positions 135–154 (GDNMHGKENDLKEFNGPEPP) are disordered. Ser163 is modified (phosphoserine). The RRM 2 domain maps to 183–265 (RTVIFANVFN…QKLLAFISGD (83 aa)). Positions 265-285 (DENTSSTSDKNEDSEVEDDLI) are disordered. Acidic residues predominate over residues 276–285 (EDSEVEDDLI).

This sequence belongs to the HTATSF1 family. Interacts with PRP11. Associates with the U2 snRNA.

U2 snRNP protein which helps to refold U2 into a structure favorable for its binding to SF3b and SF3a prior to spliceosome assembly. Mediates functional interactions between U2 RNA and PRP5. Enforces ATP dependence during formation of the prespliceosome by brokering an interaction between PRP5 and the U2 snRNP that depends on correct U2 RNA structure. The chain is Cold sensitive U2 snRNA suppressor 2 (CUS2) from Saccharomyces cerevisiae (strain ATCC 204508 / S288c) (Baker's yeast).